The primary structure comprises 266 residues: Cell wall synthesis protein Wag31 (266 aa).

Residues 31–64 are a coiled coil; sequence FLDLVENELTQLIEENSDLRQRIEELDHELAAGG. Phosphothreonine is present on threonine 77. Positions 152 to 203 form a coiled coil; sequence TAEATVAEAQQRADAMLADAQTRSEVQSRQAQEKADALQAEAERKHSEIMGA. The disordered stretch occupies residues 239–266; the sequence is ELGQRGSAAPVDSNADAGGFDQFNRGNN.

Belongs to the DivIVA family. As to quaternary structure, forms homooligomers. Phosphorylated by PknA.

Its subcellular location is the cytoplasm. Its function is as follows. Important for maintaining cell shape and cell wall integrity by localizing peptidoglycan synthesis to the cell poles. The protein is Cell wall synthesis protein Wag31 (wag31) of Mycobacterium leprae (strain TN).